Reading from the N-terminus, the 212-residue chain is High frequency lysogenization protein HflD homolog (212 aa).

A coiled-coil region spans residues 92 to 128 (LIALERKLNAKSAALDELGKRIGQLERQLEHFELLSE).

Belongs to the HflD family.

Its subcellular location is the cytoplasm. The protein localises to the cell inner membrane. The chain is High frequency lysogenization protein HflD homolog from Pectobacterium atrosepticum (strain SCRI 1043 / ATCC BAA-672) (Erwinia carotovora subsp. atroseptica).